The following is a 150-amino-acid chain: uncharacterized protein (150 aa).

The signal sequence occupies residues 1-21 (MAMEMAMMGLLGTVVGASAMG).

This is an uncharacterized protein from Mycobacterium tuberculosis (strain CDC 1551 / Oshkosh).